A 234-amino-acid polypeptide reads, in one-letter code: DNA repair protein RecO (234 aa).

The protein belongs to the RecO family.

In terms of biological role, involved in DNA repair and RecF pathway recombination. The chain is DNA repair protein RecO from Hamiltonella defensa subsp. Acyrthosiphon pisum (strain 5AT).